The chain runs to 399 residues: Tyrosine--tRNA ligase (399 aa).

The 'HIGH' region motif lies at 44–53 (PTAPDLHLGH). The 'KMSKS' region motif lies at 229 to 233 (KMSKS). Position 232 (K232) interacts with ATP. One can recognise an S4 RNA-binding domain in the interval 338 to 398 (ISITKALVDC…GKRKFAKLKV (61 aa)).

It belongs to the class-I aminoacyl-tRNA synthetase family. TyrS type 2 subfamily. Homodimer.

It is found in the cytoplasm. It catalyses the reaction tRNA(Tyr) + L-tyrosine + ATP = L-tyrosyl-tRNA(Tyr) + AMP + diphosphate + H(+). Functionally, catalyzes the attachment of tyrosine to tRNA(Tyr) in a two-step reaction: tyrosine is first activated by ATP to form Tyr-AMP and then transferred to the acceptor end of tRNA(Tyr). This Sulfurimonas denitrificans (strain ATCC 33889 / DSM 1251) (Thiomicrospira denitrificans (strain ATCC 33889 / DSM 1251)) protein is Tyrosine--tRNA ligase.